Reading from the N-terminus, the 186-residue chain is Ribosome-recycling factor (186 aa).

It belongs to the RRF family.

The protein resides in the cytoplasm. In terms of biological role, responsible for the release of ribosomes from messenger RNA at the termination of protein biosynthesis. May increase the efficiency of translation by recycling ribosomes from one round of translation to another. The chain is Ribosome-recycling factor from Leifsonia xyli subsp. xyli (strain CTCB07).